Reading from the N-terminus, the 238-residue chain is tRNA (guanine-N(1)-)-methyltransferase (238 aa).

S-adenosyl-L-methionine is bound by residues glycine 110 and 129–134 (LGDFIL).

It belongs to the RNA methyltransferase TrmD family. As to quaternary structure, homodimer.

Its subcellular location is the cytoplasm. It catalyses the reaction guanosine(37) in tRNA + S-adenosyl-L-methionine = N(1)-methylguanosine(37) in tRNA + S-adenosyl-L-homocysteine + H(+). Specifically methylates guanosine-37 in various tRNAs. The polypeptide is tRNA (guanine-N(1)-)-methyltransferase (Clostridium botulinum (strain Eklund 17B / Type B)).